The chain runs to 1121 residues: Phytochrome 2 (1121 aa).

The GAF domain maps to D214–V393. C319 contacts phytochromobilin. PAS domains are found at residues V608–E679 and D742–M813. A Histidine kinase domain is found at Y893–Q1113.

This sequence belongs to the phytochrome family. In terms of assembly, homodimer. Post-translationally, contains one covalently linked phytochromobilin chromophore.

In terms of biological role, regulatory photoreceptor which exists in two forms that are reversibly interconvertible by light: the Pr form that absorbs maximally in the red region of the spectrum and the Pfr form that absorbs maximally in the far-red region. Photoconversion of Pr to Pfr induces an array of morphogenic responses, whereas reconversion of Pfr to Pr cancels the induction of those responses. Pfr controls the expression of a number of nuclear genes including those encoding the small subunit of ribulose-bisphosphate carboxylase, chlorophyll A/B binding protein, protochlorophyllide reductase, rRNA, etc. It also controls the expression of its own gene(s) in a negative feedback fashion. The polypeptide is Phytochrome 2 (PHY2) (Ceratodon purpureus (Fire moss)).